We begin with the raw amino-acid sequence, 402 residues long: Ubiquitin-like modifier-activating enzyme 5 (402 aa).

5 residues coordinate ATP: glycine 81, aspartate 102, lysine 125, asparagine 148, and asparagine 182. Zn(2+) is bound by residues cysteine 224 and cysteine 227. Cysteine 248 functions as the Glycyl thioester intermediate in the catalytic mechanism. Cysteine 301 and cysteine 306 together coordinate Zn(2+). A disordered region spans residues 369–402; it reads EAPEKSSETSEETVTTAPPDDASLEDLMAQMKSM.

This sequence belongs to the ubiquitin-activating E1 family. UBA5 subfamily.

E1-like enzyme which activates UFM1. The sequence is that of Ubiquitin-like modifier-activating enzyme 5 from Drosophila erecta (Fruit fly).